A 421-amino-acid chain; its full sequence is tRNA (guanine(37)-N(1))-methyltransferase (421 aa).

Residues Arg198, 242–243 (DL), 270–271 (DA), and Asn293 contribute to the S-adenosyl-L-methionine site.

The protein belongs to the class I-like SAM-binding methyltransferase superfamily. TRM5/TYW2 family. As to quaternary structure, monomer.

It localises to the mitochondrion matrix. Its subcellular location is the nucleus. It is found in the cytoplasm. It catalyses the reaction guanosine(37) in tRNA + S-adenosyl-L-methionine = N(1)-methylguanosine(37) in tRNA + S-adenosyl-L-homocysteine + H(+). Specifically methylates the N1 position of guanosine-37 in various cytoplasmic and mitochondrial tRNAs. Methylation is not dependent on the nature of the nucleoside 5' of the target nucleoside. This is the first step in the biosynthesis of wybutosine (yW), a modified base adjacent to the anticodon of tRNAs and required for accurate decoding. The sequence is that of tRNA (guanine(37)-N(1))-methyltransferase from Paramecium tetraurelia.